A 153-amino-acid chain; its full sequence is Putative transmembrane protein INAFM2 (153 aa).

Over residues 1–23 (MKERDAAPAERGKPATYTGDKKA) the composition is skewed to basic and acidic residues. A disordered region spans residues 1–24 (MKERDAAPAERGKPATYTGDKKAK). Residues 36 to 56 (LATVFAYVLSVSLAAIVLAVY) traverse the membrane as a helical segment. A disordered region spans residues 66-153 (AGTSGGAAGP…EETAAAPGSR (88 aa)). A compositionally biased stretch (low complexity) spans 79–101 (GSNATGPSGTSGAAAAGPNTTGS). The span at 118 to 131 (PAPPEPPADSPPAG) shows a compositional bias: pro residues.

Its subcellular location is the membrane. The polypeptide is Putative transmembrane protein INAFM2 (Homo sapiens (Human)).